A 683-amino-acid polypeptide reads, in one-letter code: Protein kinase C eta type (683 aa).

Positions 1–118 (MSSGTMKFNG…LRTTGASDTF (118 aa)) constitute a C2 domain. A phosphoserine; by autocatalysis mark is found at S28 and S32. 2 Phorbol-ester/DAG-type zinc fingers span residues 171–222 (GHKF…VTAC) and 245–295 (PHKF…APNC). S317 is subject to Phosphoserine. A disordered region spans residues 320–342 (SKLVSRSTLRRQGKESSKEGNGI). A Protein kinase domain is found at 355-614 (FEFIRVLGKG…EHAILRHPFF (260 aa)). ATP is bound by residues 361 to 369 (LGKGSFGKV) and K384. The active-site Proton acceptor is the D479. T513 bears the Phosphothreonine; by PDPK1 mark. In terms of domain architecture, AGC-kinase C-terminal spans 615 to 683 (KEIDWAQLNH…FSYVSPELQP (69 aa)). T656 is subject to Phosphothreonine. S675 bears the Phosphoserine mark.

This sequence belongs to the protein kinase superfamily. AGC Ser/Thr protein kinase family. PKC subfamily. Interacts with FYN. Interacts with RALA. Interacts with DGKQ. Interacts with PRKCH upstream open reading frame 2; the interaction leads to inhibition of kinase activity. Most abundant in lung, less in heart and skin.

Its subcellular location is the cytoplasm. It carries out the reaction L-seryl-[protein] + ATP = O-phospho-L-seryl-[protein] + ADP + H(+). The catalysed reaction is L-threonyl-[protein] + ATP = O-phospho-L-threonyl-[protein] + ADP + H(+). With respect to regulation, novel PKCs (PRKCD, PRKCE, PRKCH and PRKCQ) are calcium-insensitive, but activated by diacylglycerol (DAG) and phosphatidylserine. Three specific sites; Thr-513 (activation loop of the kinase domain), Thr-656 (turn motif) and Ser-675 (hydrophobic region), need to be phosphorylated for its full activation. Inhibited by PRKCH upstream open reading frame 2. Its function is as follows. Calcium-independent, phospholipid- and diacylglycerol (DAG)-dependent serine/threonine-protein kinase that is involved in the regulation of cell differentiation in keratinocytes and pre-B cell receptor, mediates regulation of epithelial tight junction integrity and foam cell formation, and is required for glioblastoma proliferation and apoptosis prevention in MCF-7 cells. In keratinocytes, binds and activates the tyrosine kinase FYN, which in turn blocks epidermal growth factor receptor (EGFR) signaling and leads to keratinocyte growth arrest and differentiation. Associates with the cyclin CCNE1-CDK2-CDKN1B complex and inhibits CDK2 kinase activity, leading to RB1 dephosphorylation and thereby G1 arrest in keratinocytes. In association with RALA activates actin depolymerization, which is necessary for keratinocyte differentiation. In the pre-B cell receptor signaling, functions downstream of BLNK by up-regulating IRF4, which in turn activates L chain gene rearrangement. Regulates epithelial tight junctions (TJs) by phosphorylating occludin (OCLN) on threonine residues, which is necessary for the assembly and maintenance of TJs. In association with PLD2 and via TLR4 signaling, is involved in lipopolysaccharide (LPS)-induced RGS2 down-regulation and foam cell formation. Upon PMA stimulation, mediates glioblastoma cell proliferation by activating the mTOR pathway, the PI3K/AKT pathway and the ERK1-dependent phosphorylation of ELK1. Involved in the protection of glioblastoma cells from irradiation-induced apoptosis by preventing caspase-9 activation. In camptothecin-treated MCF-7 cells, regulates NF-kappa-B upstream signaling by activating IKBKB, and confers protection against DNA damage-induced apoptosis. Promotes oncogenic functions of ATF2 in the nucleus while blocking its apoptotic function at mitochondria. Phosphorylates ATF2 which promotes its nuclear retention and transcriptional activity and negatively regulates its mitochondrial localization. The polypeptide is Protein kinase C eta type (PRKCH) (Homo sapiens (Human)).